The chain runs to 327 residues: Carboxylesterase 20 (327 aa).

The Involved in the stabilization of the negatively charged intermediate by the formation of the oxyanion hole motif lies at 87–89 (HGG). Ser166 serves as the catalytic Nucleophile. Active-site residues include Asp272 and His302.

This sequence belongs to the 'GDXG' lipolytic enzyme family. Expressed in roots, stems, flowers and siliques.

The catalysed reaction is a carboxylic ester + H2O = an alcohol + a carboxylate + H(+). With respect to regulation, esterase activity measured in vitro with the synthetic substrate p-nitrophenyl acetate (pNPA) is inhibited by strigolactone. Functionally, carboxylesterase that possesses esterase activity in vitro with the synthetic substrate p-nitrophenyl acetate (pNPA). Binds strigolactones, but is not able to hydrolyze them. May be involved in the regulation of shoot branching. This Arabidopsis thaliana (Mouse-ear cress) protein is Carboxylesterase 20.